Consider the following 420-residue polypeptide: Mannose-1-phosphate guanylyltransferase regulatory subunit alpha (420 aa).

The tract at residues 2 to 251 (LKAVILIGGP…DGIWSQIKSA (250 aa)) is substrate-binding domain. Positions 85 and 247 each coordinate GDP-alpha-D-mannose. The segment at 273 to 420 (LAKHTPGGPR…SRSFTNQIIL (148 aa)) is hexapeptide repeat domain. The C-loop stretch occupies residues 356-384 (TPNDPNPNDPRARMDSESLFKDGKLLPAI).

Belongs to the transferase hexapeptide repeat family. Component of the GMPPA-GMPPB mannose-1-phosphate guanylyltransferase complex composed of 4 GMPPA subunits and 8 GMPPB subunits; the complex is organized into three layers, a central layer made up of 2 GMPPA dimers sandwiched between two layers each made up of 2 GMPPB dimers.

It is found in the cytoplasm. In terms of biological role, regulatory subunit of the GMPPA-GMPPB mannose-1-phosphate guanylyltransferase complex; reduces the catalytic activity of GMPPB when part of the complex. Mediates allosteric feedback inhibition of GMPPB catalytic activity upon binding GDP-alpha-D-mannose. Together with GMPPB regulates GDP-alpha-D-mannose levels. The sequence is that of Mannose-1-phosphate guanylyltransferase regulatory subunit alpha (GMPPA) from Papio anubis (Olive baboon).